A 231-amino-acid polypeptide reads, in one-letter code: Cytochrome c oxidase subunit 2 (231 aa).

The Mitochondrial intermembrane portion of the chain corresponds to 1-14; sequence MAHPAQLGLQNATS. Residues 15–45 form a helical membrane-spanning segment; that stretch reads PIMEELIAFHDHALMIIFLISSLVLYIISLM. The Mitochondrial matrix segment spans residues 46-59; it reads LTTKLTHTSTMNAQ. The chain crosses the membrane as a helical span at residues 60–87; it reads EIEMVWTILPAIILIMIALPSLRILYMT. Residues 88-231 lie on the Mitochondrial intermembrane side of the membrane; that stretch reads DEFNKPYLTL…WASYLYIVSL (144 aa). Residues His161, Cys196, Glu198, Cys200, His204, and Met207 each coordinate Cu cation. Glu198 provides a ligand contact to Mg(2+).

Belongs to the cytochrome c oxidase subunit 2 family. Component of the cytochrome c oxidase (complex IV, CIV), a multisubunit enzyme composed of 14 subunits. The complex is composed of a catalytic core of 3 subunits MT-CO1, MT-CO2 and MT-CO3, encoded in the mitochondrial DNA, and 11 supernumerary subunits COX4I, COX5A, COX5B, COX6A, COX6B, COX6C, COX7A, COX7B, COX7C, COX8 and NDUFA4, which are encoded in the nuclear genome. The complex exists as a monomer or a dimer and forms supercomplexes (SCs) in the inner mitochondrial membrane with NADH-ubiquinone oxidoreductase (complex I, CI) and ubiquinol-cytochrome c oxidoreductase (cytochrome b-c1 complex, complex III, CIII), resulting in different assemblies (supercomplex SCI(1)III(2)IV(1) and megacomplex MCI(2)III(2)IV(2)). Found in a complex with TMEM177, COA6, COX18, COX20, SCO1 and SCO2. Interacts with TMEM177 in a COX20-dependent manner. Interacts with COX20. Interacts with COX16. Cu cation serves as cofactor.

The protein localises to the mitochondrion inner membrane. The catalysed reaction is 4 Fe(II)-[cytochrome c] + O2 + 8 H(+)(in) = 4 Fe(III)-[cytochrome c] + 2 H2O + 4 H(+)(out). In terms of biological role, component of the cytochrome c oxidase, the last enzyme in the mitochondrial electron transport chain which drives oxidative phosphorylation. The respiratory chain contains 3 multisubunit complexes succinate dehydrogenase (complex II, CII), ubiquinol-cytochrome c oxidoreductase (cytochrome b-c1 complex, complex III, CIII) and cytochrome c oxidase (complex IV, CIV), that cooperate to transfer electrons derived from NADH and succinate to molecular oxygen, creating an electrochemical gradient over the inner membrane that drives transmembrane transport and the ATP synthase. Cytochrome c oxidase is the component of the respiratory chain that catalyzes the reduction of oxygen to water. Electrons originating from reduced cytochrome c in the intermembrane space (IMS) are transferred via the dinuclear copper A center (CU(A)) of subunit 2 and heme A of subunit 1 to the active site in subunit 1, a binuclear center (BNC) formed by heme A3 and copper B (CU(B)). The BNC reduces molecular oxygen to 2 water molecules using 4 electrons from cytochrome c in the IMS and 4 protons from the mitochondrial matrix. The protein is Cytochrome c oxidase subunit 2 (MT-CO2) of Lagothrix lagotricha (Brown woolly monkey).